The primary structure comprises 168 residues: Disulfide bond formation protein B 2 (168 aa).

Residues 1–9 are Cytoplasmic-facing; the sequence is MSLACLRSF. The helical transmembrane segment at 10–26 threads the bilayer; sequence FLPALLASTAVLVASFH. The Periplasmic portion of the chain corresponds to 27-44; it reads LESVVGLVPCALCFSQRL. A disulfide bridge connects residues C36 and C39. The chain crosses the membrane as a helical span at residues 45 to 61; sequence MLGVYALVCLAALVHSP. The Cytoplasmic portion of the chain corresponds to 62 to 67; sequence AARGRR. Residues 68–85 form a helical membrane-spanning segment; the sequence is AYAGLALASAFGGALLAG. Topologically, residues 86–140 are periplasmic; sequence RHVWLQGDPQVVDGCHLPVEQVLQRPLGEILQMFLLGSPDCVSISWSFLDLTLPE. Residues C100 and C126 are joined by a disulfide bond. Residues 141–159 form a helical membrane-spanning segment; the sequence is WSLLAFLLLAAMPLSWLVA. The Cytoplasmic segment spans residues 160-168; that stretch reads YRFRKRAMA.

This sequence belongs to the DsbB family.

It is found in the cell inner membrane. Functionally, required for disulfide bond formation in some periplasmic proteins. Acts by oxidizing the DsbA protein. This chain is Disulfide bond formation protein B 2, found in Pseudomonas entomophila (strain L48).